We begin with the raw amino-acid sequence, 269 residues long: Lipid II flippase Amj (269 aa).

Transmembrane regions (helical) follow at residues 1–21 (MHVI…IHSI), 31–51 (SGAR…MVIV), 84–104 (FLIF…PSFV), 105–125 (ALFS…FQVF), 161–181 (LFVI…SALY), 192–212 (TAVM…AIFV), and 245–265 (VAGT…IAWL).

The protein belongs to the Amj family.

The protein localises to the cell membrane. It functions in the pathway cell wall biogenesis; peptidoglycan biosynthesis. Involved in peptidoglycan biosynthesis. Transports lipid-linked peptidoglycan precursors from the inner to the outer leaflet of the cytoplasmic membrane. May serve as a defense mechanism against naturally occurring MurJ antagonists. This chain is Lipid II flippase Amj, found in Bacillus subtilis (strain 168).